The primary structure comprises 85 residues: Cell division topological specificity factor (85 aa).

Belongs to the MinE family.

In terms of biological role, prevents the cell division inhibition by proteins MinC and MinD at internal division sites while permitting inhibition at polar sites. This ensures cell division at the proper site by restricting the formation of a division septum at the midpoint of the long axis of the cell. The polypeptide is Cell division topological specificity factor (Xylella fastidiosa (strain M23)).